A 78-amino-acid chain; its full sequence is Large ribosomal subunit protein bL28 (78 aa).

The segment at 1–20 (MSRVCQVTGKGPVTGNNISH) is disordered.

Belongs to the bacterial ribosomal protein bL28 family.

The chain is Large ribosomal subunit protein bL28 from Pseudomonas putida (strain ATCC 700007 / DSM 6899 / JCM 31910 / BCRC 17059 / LMG 24140 / F1).